The primary structure comprises 404 residues: Ubiquitin-like modifier-activating enzyme 5 (404 aa).

Ser45 carries the phosphoserine modification. The ATP site is built by Gly83, Asp104, Lys127, Asn150, and Asn184. Residues Cys226 and Cys229 each contribute to the Zn(2+) site. Catalysis depends on Cys250, which acts as the Glycyl thioester intermediate. Cys303 and Cys308 together coordinate Zn(2+). The UFM1-interacting sequence (UIS) signature appears at 334 to 346 (IIHEDNEWGIELV). Positions 347–377 (SEISEEELKKSSGPIPDLPEGIIVAYTVPQK) are linker. Residues Ser358 and Ser393 each carry the phosphoserine modification. A UFC1-binding sequence (UFC) motif is present at residues 389-404 (DSGESLEDLMAKMKNI).

This sequence belongs to the ubiquitin-activating E1 family. UBA5 subfamily. Homodimer; homodimerization is required for UFM1 activation. Interacts (via UIS motif) with UFM1; binds UFM1 via a trans-binding mechanism in which UFM1 interacts with distinct sites in both subunits of the UBA5 homodimer. Interacts (via C-terminus) with UFC1. Interacts (via UIS motif) with GABARAPL2 and, with lower affinity, with GABARAP and GABARAPL1.

Its subcellular location is the cytoplasm. The protein resides in the nucleus. The protein localises to the endoplasmic reticulum membrane. It localises to the golgi apparatus. Functionally, E1-like enzyme which specifically catalyzes the first step in ufmylation. Activates UFM1 by first adenylating its C-terminal glycine residue with ATP, and thereafter linking this residue to the side chain of a cysteine residue in E1, yielding a UFM1-E1 thioester and free AMP. Activates UFM1 via a trans-binding mechanism, in which UFM1 interacts with distinct sites in both subunits of the UBA5 homodimer. Trans-binding also promotes stabilization of the UBA5 homodimer, and enhances ATP-binding. Transfer of UFM1 from UBA5 to the E2-like enzyme UFC1 also takes place using a trans mechanism. Ufmylation plays a key role in various processes, such as ribosome recycling, response to DNA damage, interferon response or reticulophagy (also called ER-phagy). Ufmylation is essential for erythroid differentiation of both megakaryocytes and erythrocytes. The chain is Ubiquitin-like modifier-activating enzyme 5 from Bos taurus (Bovine).